The sequence spans 852 residues: Disrupted in schizophrenia 1 homolog (852 aa).

Disordered regions lie at residues 1–86 (MQGG…GLDP), 236–264 (EAEP…PRHL), and 280–320 (QVTR…QGGG). The interval 1 to 294 (MQGGGPRGAP…SSRQSECGTV (294 aa)) is interaction with MAP1A. Polar residues predominate over residues 65-79 (AGLTGQQSQHSQSKA). Residues 253–263 (SSDRPHGDPRH) are compositionally biased toward basic and acidic residues. Positions 288 to 311 (QSECGTVSSSSSDTGFSSQDASSA) are enriched in low complexity. The segment at 295 to 693 (SSSSSDTGFS…LGRVWKADLE (399 aa)) is interaction with TRAF3IP1. Coiled-coil stretches lie at residues 367 to 397 (EDGD…ALPS) and 449 to 496 (ITRR…LLRW). Residues 437–594 (LRTTAQDSLP…LLEAKMLALS (158 aa)) are required for localization to punctate cytoplasmic foci. The segment at 443-852 (DSLPASITRR…PTAGAQETEA (410 aa)) is necessary and sufficient for interaction with PCNT and localization at the centrosome. Residues 595-852 (GSCFSTAKEL…PTAGAQETEA (258 aa)) are interaction with ATF4 and ATF5. Disordered stretches follow at residues 706 to 746 (EAGS…KSPL) and 833 to 852 (KEAG…ETEA). The tract at residues 728-852 (TAALAVPRTP…PTAGAQETEA (125 aa)) is interaction with NDEL1 and PAFAH1B1. An interaction with PAFAH1B1 region spans residues 728–852 (TAALAVPRTP…PTAGAQETEA (125 aa)). The interaction with NDEL1 stretch occupies residues 802–835 (SHDEALFQSLQGELQTVKETLQAMILQLQPTKEA).

In terms of assembly, interacts with NDEL1. Interacts with CCDC88A (via C-terminus); the interaction is direct. Interacts with GSK3B. Interacts with tubulin alpha, ACTN2, ANKHD1, ATF4, ATF5, CEP63, EIF3S3, MAP1A, NDEL1, PAFAH1B1, RANBP9, SPTBN4, SYNE1 and TRAF3IP1. Interaction with microtubules may be mediated in part by TRAF3IP1. Interacts (via C-terminal) with PCNT. Interacts with CHCHD6. Interacts with CCDC141. Interacts with FBXW7, the substrate-recognition component of a SCF (SKP1-CUL1-F-box protein) E3 ubiquitin-protein ligase complex; the interaction targets DISC1 for proteasomal degradation. Interacts with ZNF365. Interacts with ATF4; inhibiting ATF4 transcription factor activity by disrupting ATF4 dimerization and DNA-binding. Interacts with PDE4B. Post-translationally, ubiquitinated. Ubiquitination with 'Lys-48'-linked polyubiquitin chains leads to its proteasomal degradation. As to expression, expressed in granule cell precursors within the dentate migratory stream during the first week of postnatal life and in differentiated granule cells of the hippocampus (at protein level). Detected in heart, brain, kidney, and testis. Expressed in dentate gyrus, hippocampus and in the olfactory bulb.

The protein resides in the cytoplasm. Its subcellular location is the cytoskeleton. It localises to the mitochondrion. It is found in the microtubule organizing center. The protein localises to the centrosome. The protein resides in the postsynaptic density. Functionally, involved in the regulation of multiple aspects of embryonic and adult neurogenesis. Required for neural progenitor proliferation in the ventrical/subventrical zone during embryonic brain development and in the adult dentate gyrus of the hippocampus. Participates in the Wnt-mediated neural progenitor proliferation as a positive regulator by modulating GSK3B activity and CTNNB1 abundance. Plays a role as a modulator of the AKT-mTOR signaling pathway controlling the tempo of the process of newborn neurons integration during adult neurogenesis, including neuron positioning, dendritic development and synapse formation. Inhibits the activation of AKT-mTOR signaling upon interaction with CCDC88A. Regulates the migration of early-born granule cell precursors toward the dentate gyrus during the hippocampal development. Inhibits ATF4 transcription factor activity in neurons by disrupting ATF4 dimerization and DNA-binding. Plays a role, together with PCNT, in the microtubule network formation. The protein is Disrupted in schizophrenia 1 homolog of Mus musculus (Mouse).